The following is a 261-amino-acid chain: Phosphonates import ATP-binding protein PhnC (261 aa).

The ABC transporter domain maps to 8 to 253 (LRVENLSKTY…WFRRIYGEGA (246 aa)). 41-48 (GLSGSGKS) contacts ATP.

Belongs to the ABC transporter superfamily. Phosphonates importer (TC 3.A.1.9.1) family. In terms of assembly, the complex is composed of two ATP-binding proteins (PhnC), two transmembrane proteins (PhnE) and a solute-binding protein (PhnD).

It is found in the cell inner membrane. The catalysed reaction is phosphonate(out) + ATP + H2O = phosphonate(in) + ADP + phosphate + H(+). In terms of biological role, part of the ABC transporter complex PhnCDE involved in phosphonates import. Responsible for energy coupling to the transport system. In Bdellovibrio bacteriovorus (strain ATCC 15356 / DSM 50701 / NCIMB 9529 / HD100), this protein is Phosphonates import ATP-binding protein PhnC.